The sequence spans 266 residues: Ras-like protein family member 12 (266 aa).

GTP contacts are provided by residues 27 to 34, 74 to 78, and 134 to 137; these read GRRGAGKS, DTADL, and NKLD.

It belongs to the small GTPase superfamily. Ras family.

The catalysed reaction is GTP + H2O = GDP + phosphate + H(+). The protein is Ras-like protein family member 12 (RASL12) of Homo sapiens (Human).